A 949-amino-acid chain; its full sequence is L-fucokinase/L-fucose-1-P guanylyltransferase (949 aa).

The fucose-1-phosphate guanylyltransferase stretch occupies residues 25–191; sequence DWFCTSDPVG…DFMLQKPSLA (167 aa). The L-fucokinase stretch occupies residues 559–949; that stretch reads LLRDGLLDGI…SDKGFQVSRS (391 aa).

This sequence belongs to the GHMP kinase family. As to quaternary structure, homotetramer. Requires Mn(2+) as cofactor. Mg(2+) serves as cofactor.

It carries out the reaction L-fucose + ATP = beta-L-fucose 1-phosphate + ADP + H(+). It catalyses the reaction beta-L-fucose 1-phosphate + GTP + H(+) = GDP-beta-L-fucose + diphosphate. Bifunctional enzyme involved in the salvage pathway of GDP-fucose synthesis. Catalyzes two successive reactions, the ATP-dependent phosphorylation of L-fucose to L-fucose 1-phosphate, and its guanylylation to GDP-L-fucose. GDP-fucose is an important fucose donor in the process of fucosylated oligosaccharides formation. The chain is L-fucokinase/L-fucose-1-P guanylyltransferase from Bacteroides fragilis.